The sequence spans 149 residues: MHCPFCSAVDTKVIDSRLVGEGSSVRRRRQCLVCNERFTTFEVAELVMPRVVKSNDVREPFNEEKLRKGMLKALEKRPVSADDVEMALNHIKSYLRGTGEREVPSKMIGNLVMEQLKKLDKVAYIRFASVYRSFEDIKEFGEEIARLQD.

The segment at 3 to 34 (CPFCSAVDTKVIDSRLVGEGSSVRRRRQCLVC) is a zinc-finger region. Residues 49 to 139 (PRVVKSNDVR…VYRSFEDIKE (91 aa)) form the ATP-cone domain.

It belongs to the NrdR family. The cofactor is Zn(2+).

In terms of biological role, negatively regulates transcription of bacterial ribonucleotide reductase nrd genes and operons by binding to NrdR-boxes. In Enterobacter sp. (strain 638), this protein is Transcriptional repressor NrdR.